The following is a 147-amino-acid chain: Large ribosomal subunit protein uL13 (147 aa).

This sequence belongs to the universal ribosomal protein uL13 family. In terms of assembly, part of the 50S ribosomal subunit.

In terms of biological role, this protein is one of the early assembly proteins of the 50S ribosomal subunit, although it is not seen to bind rRNA by itself. It is important during the early stages of 50S assembly. This is Large ribosomal subunit protein uL13 from Nocardia farcinica (strain IFM 10152).